Here is a 160-residue protein sequence, read N- to C-terminus: Small ribosomal subunit protein uS17m (160 aa).

This sequence belongs to the universal ribosomal protein uS17 family. In terms of assembly, component of the mitochondrial ribosome small subunit (28S) which comprises a 12S rRNA and about 30 distinct proteins.

Its subcellular location is the mitochondrion. The polypeptide is Small ribosomal subunit protein uS17m (mrps-17) (Caenorhabditis elegans).